Reading from the N-terminus, the 104-residue chain is DNA-directed RNA polymerase subunit omega (104 aa).

The segment at 76-104 (IEEEKRRKEEEEKKIKEQIAKEKEDGEKI) is disordered.

The protein belongs to the RNA polymerase subunit omega family. The RNAP catalytic core consists of 2 alpha, 1 beta, 1 beta' and 1 omega subunit. When a sigma factor is associated with the core the holoenzyme is formed, which can initiate transcription.

The enzyme catalyses RNA(n) + a ribonucleoside 5'-triphosphate = RNA(n+1) + diphosphate. In terms of biological role, promotes RNA polymerase assembly. Latches the N- and C-terminal regions of the beta' subunit thereby facilitating its interaction with the beta and alpha subunits. The chain is DNA-directed RNA polymerase subunit omega from Streptococcus pneumoniae (strain CGSP14).